A 683-amino-acid polypeptide reads, in one-letter code: MSSGTMKFNGYLRVRIGEAVGLQPTRWSLRHSLFKKGHQLLDPYLTVSVDQVRVGQTSTKQKTNKPTYNEEFCANVTDGGHLELAVFHETPLGYDHFVANCTLQFQELLRTTGASDTFEGWVDLEPEGKVFVVITLTGSFTEATLQRDRIFKHFTRKRQRAMRRRVHQINGHKFMATYLRQPTYCSHCREFIWGVFGKQGYQCQVCTCVVHKRCHHLIVTACTCQNNINKVDSKIAEQRFGINIPHKFSIHNYKVPTFCDHCGSLLWGIMRQGLQCKICKMNVHIRCQANVAPNCGVNAVELAKTLAGMGLQPGNISPTSKLVSRSTLRRQGKESSKEGNGIGVNSSNRLGIDNFEFIRVLGKGSFGKVMLARVKETGDLYAVKVLKKDVILQDDDVECTMTEKRILSLARNHPFLTQLFCCFQTPDRLFFVMEFVNGGDLMFHIQKSRRFDEARARFYAAEIISALMFLHDKGIIYRDLKLDNVLLDHEGHCKLADFGMCKEGICNGVTTATFCGTPDYIAPEILQEMLYGPAVDWWAMGVLLYEMLCGHAPFEAENEDDLFEAILNDEVVYPTWLHEDATGILKSFMTKNPTMRLGSLTQGGEHAILRHPFFKEIDWAQLNHRQIEPPFRPRIKSREDVSNFDPDFIKEEPVLTPIDEGHLPMINQDEFRNFSYVSPELQP.

A C2 domain is found at 1 to 118 (MSSGTMKFNG…LRTTGASDTF (118 aa)). Residues Ser28 and Ser32 each carry the phosphoserine; by autocatalysis modification. 2 Phorbol-ester/DAG-type zinc fingers span residues 171-222 (GHKF…VTAC) and 245-295 (PHKF…APNC). The residue at position 317 (Ser317) is a Phosphoserine. The disordered stretch occupies residues 320–342 (SKLVSRSTLRRQGKESSKEGNGI). The 260-residue stretch at 355-614 (FEFIRVLGKG…EHAILRHPFF (260 aa)) folds into the Protein kinase domain. ATP is bound by residues 361-369 (LGKGSFGKV) and Lys384. Asp479 functions as the Proton acceptor in the catalytic mechanism. Thr513 bears the Phosphothreonine; by PDPK1 mark. An AGC-kinase C-terminal domain is found at 615–683 (KEIDWAQLNH…FSYVSPELQP (69 aa)). Position 656 is a phosphothreonine (Thr656). Ser675 bears the Phosphoserine mark.

The protein belongs to the protein kinase superfamily. AGC Ser/Thr protein kinase family. PKC subfamily. As to quaternary structure, interacts with FYN. Interacts with RALA. Interacts with DGKQ. Interacts with PRKCH upstream open reading frame 2; the interaction leads to inhibition of kinase activity. As to expression, most abundant in lung, less in heart and skin.

The protein localises to the cytoplasm. It carries out the reaction L-seryl-[protein] + ATP = O-phospho-L-seryl-[protein] + ADP + H(+). The enzyme catalyses L-threonyl-[protein] + ATP = O-phospho-L-threonyl-[protein] + ADP + H(+). Novel PKCs (PRKCD, PRKCE, PRKCH and PRKCQ) are calcium-insensitive, but activated by diacylglycerol (DAG) and phosphatidylserine. Three specific sites; Thr-513 (activation loop of the kinase domain), Thr-656 (turn motif) and Ser-675 (hydrophobic region), need to be phosphorylated for its full activation. Inhibited by PRKCH upstream open reading frame 2. In terms of biological role, calcium-independent, phospholipid- and diacylglycerol (DAG)-dependent serine/threonine-protein kinase that is involved in the regulation of cell differentiation in keratinocytes and pre-B cell receptor, mediates regulation of epithelial tight junction integrity and foam cell formation, and is required for glioblastoma proliferation and apoptosis prevention in MCF-7 cells. In keratinocytes, binds and activates the tyrosine kinase FYN, which in turn blocks epidermal growth factor receptor (EGFR) signaling and leads to keratinocyte growth arrest and differentiation. Associates with the cyclin CCNE1-CDK2-CDKN1B complex and inhibits CDK2 kinase activity, leading to RB1 dephosphorylation and thereby G1 arrest in keratinocytes. In association with RALA activates actin depolymerization, which is necessary for keratinocyte differentiation. In the pre-B cell receptor signaling, functions downstream of BLNK by up-regulating IRF4, which in turn activates L chain gene rearrangement. Regulates epithelial tight junctions (TJs) by phosphorylating occludin (OCLN) on threonine residues, which is necessary for the assembly and maintenance of TJs. In association with PLD2 and via TLR4 signaling, is involved in lipopolysaccharide (LPS)-induced RGS2 down-regulation and foam cell formation. Upon PMA stimulation, mediates glioblastoma cell proliferation by activating the mTOR pathway, the PI3K/AKT pathway and the ERK1-dependent phosphorylation of ELK1. Involved in the protection of glioblastoma cells from irradiation-induced apoptosis by preventing caspase-9 activation. In camptothecin-treated MCF-7 cells, regulates NF-kappa-B upstream signaling by activating IKBKB, and confers protection against DNA damage-induced apoptosis. Promotes oncogenic functions of ATF2 in the nucleus while blocking its apoptotic function at mitochondria. Phosphorylates ATF2 which promotes its nuclear retention and transcriptional activity and negatively regulates its mitochondrial localization. This Homo sapiens (Human) protein is Protein kinase C eta type (PRKCH).